The following is a 396-amino-acid chain: Ribosomal RNA large subunit methyltransferase I (396 aa).

Residues 2–79 form the PUA domain; it reads AIRIKLKPGR…REEEIDRAFF (78 aa).

The protein belongs to the methyltransferase superfamily. RlmI family.

The protein resides in the cytoplasm. The enzyme catalyses cytidine(1962) in 23S rRNA + S-adenosyl-L-methionine = 5-methylcytidine(1962) in 23S rRNA + S-adenosyl-L-homocysteine + H(+). In terms of biological role, specifically methylates the cytosine at position 1962 (m5C1962) of 23S rRNA. This is Ribosomal RNA large subunit methyltransferase I from Shewanella putrefaciens (strain CN-32 / ATCC BAA-453).